We begin with the raw amino-acid sequence, 302 residues long: Nucleotide-binding protein BceJ2315_08000 (302 aa).

8–15 (GISGSGKS) is an ATP binding site. Residue 57–60 (DARS) participates in GTP binding.

Belongs to the RapZ-like family.

Its function is as follows. Displays ATPase and GTPase activities. The protein is Nucleotide-binding protein BceJ2315_08000 of Burkholderia cenocepacia (strain ATCC BAA-245 / DSM 16553 / LMG 16656 / NCTC 13227 / J2315 / CF5610) (Burkholderia cepacia (strain J2315)).